A 207-amino-acid chain; its full sequence is Probable isochorismatase (207 aa).

It belongs to the isochorismatase family.

The catalysed reaction is isochorismate + H2O = (2S,3S)-2,3-dihydroxy-2,3-dihydrobenzoate + pyruvate. It participates in antibiotic biosynthesis; phenazine biosynthesis. Involved in the biosynthesis of the antibiotic phenazine, a nitrogen-containing heterocyclic molecule having important roles in virulence, competition and biological control. This isochorismatase may remove pyruvate from chorismate during the formation of the phenazine ring structure and/or stabilize the phenazine biosynthetic complex. In Pseudomonas chlororaphis (Pseudomonas aureofaciens), this protein is Probable isochorismatase (phzA).